The sequence spans 164 residues: Large ribosomal subunit protein bL9 (164 aa).

Belongs to the bacterial ribosomal protein bL9 family.

Binds to the 23S rRNA. The protein is Large ribosomal subunit protein bL9 of Borrelia duttonii (strain Ly).